The sequence spans 193 residues: uncharacterized protein (193 aa).

This is an uncharacterized protein from Archaeoglobus fulgidus (strain ATCC 49558 / DSM 4304 / JCM 9628 / NBRC 100126 / VC-16).